Reading from the N-terminus, the 661-residue chain is MNPDLRRERAAATFNPELITHLLDGSPEKTRRRREIENKILSDPDFQHENHNFLTRSERYEAAIKKSAVMVKKMREFGIADPDEIMWFKRLLLGNFVEPVGLNYSMFIPTLLNQGTTAQQEKWLHPSTGLQIIGTYAQTEMGHGTHLRGLETTATYDPKTQEFIINSPTVTSIKWWPGGLGKTSNHAIVLAQLITQGKCYGLHAFIVPIREIGTHKPLPGITVGDIGPKFGYEEMDNGYLKMDNYRIPRENMLMKYAQVKPDGTYVKPVSNKLTYGTMVFVRSFLVGAAAQSLSKACTIAIRYSAVRHQSEIKPGEPEPQVLDFQTQQYKLFPILATAYAFQFVGSYMKDTYHRINESIGQGDLSELPELHALTAGLKAFTTWTANAGIEECRLACGGHGYSHCSGIPNIYVTFTPACTFEGENTVMMLQTARFLMKVYDQVQSGKLVHGLVSYLNDLPSQRIQPQQVAVWPTVVDINNPDSLTEIYKLRAARLIDIAAKSLQGEMSHRKSKEVAWNLTSVGLVRATDAHCHYVVVKLFADKLLKIQDKTIQAVLRNLFLLYSLYGISQKAGDFLQGNIMTGSQITQVNQRVLELLAVIRPNAVALVDAFDYKDITLGSVLGRYDGNVYENLFEWAKKSPLNKTEVHESYHKYLKPLQSKL.

Ser26 carries the post-translational modification Phosphoserine. An N6-acetyllysine modification is found at Lys65. Lys89 carries the N6-succinyllysine modification. Residue Thr139 coordinates FAD. Lys159 is modified (N6-succinyllysine). Gly178 contributes to the FAD binding site. Lys216 carries the N6-acetyllysine modification. At Lys241 the chain carries N6-succinyllysine. N6-acetyllysine occurs at positions 255, 267, and 272. An N6-succinyllysine modification is found at Lys349. Glu421 functions as the Proton acceptor in the catalytic mechanism. N6-acetyllysine; alternate is present on residues Lys437 and Lys446. N6-succinyllysine; alternate is present on residues Lys437 and Lys446. Lys500 carries the N6-acetyllysine modification. Lys512 carries the N6-acetyllysine; alternate modification. An N6-succinyllysine; alternate modification is found at Lys512. Lys542 carries the N6-succinyllysine modification. At Lys637 the chain carries N6-acetyllysine; alternate. Residue Lys637 is modified to N6-succinyllysine; alternate. Lys643 carries the post-translational modification N6-succinyllysine. Position 649 is a phosphoserine (Ser649). N6-acetyllysine is present on Lys652. At Lys655 the chain carries N6-succinyllysine. Positions 659–661 (SKL) match the Microbody targeting signal motif.

Belongs to the acyl-CoA oxidase family. As to quaternary structure, homodimer. Interacts with LONP2. FAD is required as a cofactor.

Its subcellular location is the peroxisome. It carries out the reaction a 2,3-saturated acyl-CoA + O2 = a (2E)-enoyl-CoA + H2O2. The catalysed reaction is hexadecanoyl-CoA + O2 = (2E)-hexadecenoyl-CoA + H2O2. It catalyses the reaction dodecanoyl-CoA + O2 = (2E)-dodecenoyl-CoA + H2O2. The enzyme catalyses octanoyl-CoA + O2 = (2E)-octenoyl-CoA + H2O2. It carries out the reaction decanoyl-CoA + O2 = (2E)-decenoyl-CoA + H2O2. The catalysed reaction is tetradecanoyl-CoA + O2 = (2E)-tetradecenoyl-CoA + H2O2. It catalyses the reaction hexadecanedioyl-CoA + O2 = (2E)-hexadecenedioyl-CoA + H2O2. The enzyme catalyses tetracosanoyl-CoA + O2 = (2E)-tetracosenoyl-CoA + H2O2. It carries out the reaction glutaryl-CoA + O2 = (2E)-glutaconyl-CoA + H2O2. The catalysed reaction is hexanoyl-CoA + O2 = (2E)-hexenoyl-CoA + H2O2. It catalyses the reaction octadecanoyl-CoA + O2 = (2E)-octadecenoyl-CoA + H2O2. The enzyme catalyses (5Z,8Z,11Z,14Z,17Z)-eicosapentaenoyl-CoA + O2 = (2E,5Z,8Z,11Z,14Z,17Z)-icosahexaenoyl-CoA + H2O2. It carries out the reaction (6Z,9Z,12Z,15Z,18Z,21Z)-tetracosahexaenoyl-CoA + O2 = (2E,6Z,9Z,12Z,15Z,18Z,21Z)-tetracosaheptaenoyl-CoA + H2O2. Its pathway is lipid metabolism; peroxisomal fatty acid beta-oxidation. Involved in the initial and rate-limiting step of peroxisomal beta-oxidation of straight-chain saturated and unsaturated very-long-chain fatty acids. Catalyzes the desaturation of fatty acyl-CoAs such as palmitoyl-CoA (hexadecanoyl-CoA) to 2-trans-enoyl-CoAs ((2E)-enoyl-CoAs) such as (2E)-hexadecenoyl-CoA, and donates electrons directly to molecular oxygen (O(2)), thereby producing hydrogen peroxide (H(2)O(2)). This is Peroxisomal acyl-coenzyme A oxidase 1 from Cavia porcellus (Guinea pig).